Here is a 238-residue protein sequence, read N- to C-terminus: Deoxyribose-phosphate aldolase (238 aa).

Catalysis depends on Asp-102, which acts as the Proton donor/acceptor. Lys-164 (schiff-base intermediate with acetaldehyde) is an active-site residue. Catalysis depends on Lys-193, which acts as the Proton donor/acceptor.

It belongs to the DeoC/FbaB aldolase family. DeoC type 1 subfamily.

It localises to the cytoplasm. The enzyme catalyses 2-deoxy-D-ribose 5-phosphate = D-glyceraldehyde 3-phosphate + acetaldehyde. It participates in carbohydrate degradation; 2-deoxy-D-ribose 1-phosphate degradation; D-glyceraldehyde 3-phosphate and acetaldehyde from 2-deoxy-alpha-D-ribose 1-phosphate: step 2/2. Functionally, catalyzes a reversible aldol reaction between acetaldehyde and D-glyceraldehyde 3-phosphate to generate 2-deoxy-D-ribose 5-phosphate. This Rhodospirillum rubrum (strain ATCC 11170 / ATH 1.1.1 / DSM 467 / LMG 4362 / NCIMB 8255 / S1) protein is Deoxyribose-phosphate aldolase.